The chain runs to 90 residues: Small ribosomal subunit protein bS16 (90 aa).

This sequence belongs to the bacterial ribosomal protein bS16 family.

This Streptococcus pneumoniae (strain Hungary19A-6) protein is Small ribosomal subunit protein bS16.